A 213-amino-acid polypeptide reads, in one-letter code: Neuroligin-4, X-linked (213 aa).

Residues 1–56 are disordered; the sequence is FQYVSTTTKVPPPDMTSFPYGTRRSPAKIWPTTKRPAITPANNPKHSKDPHKTGPE. At 1–73 the chain is on the extracellular side; it reads FQYVSTTTKV…TKRDYSTELS (73 aa). Positions 46–55 are enriched in basic and acidic residues; that stretch reads HSKDPHKTGP. The helical transmembrane segment at 74–94 threads the bilayer; that stretch reads VTIAVGASLLFLNILAFAALY. The Cytoplasmic segment spans residues 95-213; it reads YKKDKRRHET…LPHGHSTTRV (119 aa). Serine 109 is modified (phosphoserine).

This sequence belongs to the type-B carboxylesterase/lipase family. Homodimer. Interacts with NRXN1 in a calcium-dependent manner. Interaction with neurexins is mediated by heparan sulfate glycan modification on neurexin. Interacts through its C-terminus with DLG4/PSD-95 third PDZ domain.

Its subcellular location is the cell membrane. The protein localises to the postsynaptic density membrane. Its function is as follows. Cell surface protein involved in cell-cell-interactions via its interactions with neurexin family members. This chain is Neuroligin-4, X-linked (NLGN4X), found in Macaca mulatta (Rhesus macaque).